We begin with the raw amino-acid sequence, 354 residues long: AT-hook motif nuclear-localized protein 11 (354 aa).

2 disordered regions span residues 1–158 and 290–354; these read MDRR…MMPS and KREE…LMRG. Low complexity-rich tracts occupy residues 46-55 and 75-96; these read NSISPFGSNP and VDSS…PPSG. Positions 101 to 109 match the Bipartite nuclear localization signal motif; sequence KRKRGRPRK. Positions 101 to 113 form a DNA-binding region, a.T hook 1; the sequence is KRKRGRPRKYGQD. The segment covering 122 to 133 has biased composition (low complexity); sequence SPSISNVSPNSN. The a.T hook 2 DNA-binding region spans 134-146; the sequence is KRGRGRPPGSGKK. The region spanning 159 to 302 is the PPC domain; it reads STGMSFTPHV…ETSEDVQDTD (144 aa). The segment covering 294 to 303 has biased composition (acidic residues); the sequence is TSEDVQDTDA. Polar residues predominate over residues 304–327; it reads LENNNDNTAATSPPVPQQSQNIVQ. The span at 340-354 shows a compositional bias: basic and acidic residues; it reads MDMHHPHMDIDLMRG.

The protein localises to the nucleus. Its function is as follows. Transcription factor that specifically binds AT-rich DNA sequences related to the nuclear matrix attachment regions (MARs). The sequence is that of AT-hook motif nuclear-localized protein 11 from Arabidopsis thaliana (Mouse-ear cress).